The chain runs to 311 residues: tRNA-cytidine(32) 2-sulfurtransferase (311 aa).

The disordered stretch occupies residues 18 to 38 (KVGADHGPSEENGSSHPLFDN). The short motif at 77 to 82 (SGGKDS) is the PP-loop motif element. Residues Cys152, Cys155, and Cys243 each coordinate [4Fe-4S] cluster.

Belongs to the TtcA family. As to quaternary structure, homodimer. Requires Mg(2+) as cofactor. The cofactor is [4Fe-4S] cluster.

The protein localises to the cytoplasm. The enzyme catalyses cytidine(32) in tRNA + S-sulfanyl-L-cysteinyl-[cysteine desulfurase] + AH2 + ATP = 2-thiocytidine(32) in tRNA + L-cysteinyl-[cysteine desulfurase] + A + AMP + diphosphate + H(+). It functions in the pathway tRNA modification. In terms of biological role, catalyzes the ATP-dependent 2-thiolation of cytidine in position 32 of tRNA, to form 2-thiocytidine (s(2)C32). The sulfur atoms are provided by the cysteine/cysteine desulfurase (IscS) system. The polypeptide is tRNA-cytidine(32) 2-sulfurtransferase (Agrobacterium fabrum (strain C58 / ATCC 33970) (Agrobacterium tumefaciens (strain C58))).